Reading from the N-terminus, the 376-residue chain is Putative phosphoserine aminotransferase (376 aa).

Arginine 50 contacts L-glutamate. Pyridoxal 5'-phosphate-binding positions include 84–85 (AT), phenylalanine 108, threonine 154, aspartate 176, and glutamine 199. Lysine 200 is modified (N6-(pyridoxal phosphate)lysine). 251 to 252 (NT) provides a ligand contact to pyridoxal 5'-phosphate.

The protein belongs to the class-V pyridoxal-phosphate-dependent aminotransferase family. SerC subfamily. Homodimer. It depends on pyridoxal 5'-phosphate as a cofactor.

The protein resides in the cytoplasm. The enzyme catalyses O-phospho-L-serine + 2-oxoglutarate = 3-phosphooxypyruvate + L-glutamate. The catalysed reaction is 4-(phosphooxy)-L-threonine + 2-oxoglutarate = (R)-3-hydroxy-2-oxo-4-phosphooxybutanoate + L-glutamate. It functions in the pathway amino-acid biosynthesis; L-serine biosynthesis; L-serine from 3-phospho-D-glycerate: step 2/3. It participates in cofactor biosynthesis; pyridoxine 5'-phosphate biosynthesis; pyridoxine 5'-phosphate from D-erythrose 4-phosphate: step 3/5. Functionally, catalyzes the reversible conversion of 3-phosphohydroxypyruvate to phosphoserine and of 3-hydroxy-2-oxo-4-phosphonooxybutanoate to phosphohydroxythreonine. In Mycobacterium bovis (strain ATCC BAA-935 / AF2122/97), this protein is Putative phosphoserine aminotransferase.